Consider the following 141-residue polypeptide: D-aminoacyl-tRNA deacylase (141 aa).

The Gly-cisPro motif, important for rejection of L-amino acids signature appears at 133 to 134 (GP).

Belongs to the DTD family. In terms of assembly, homodimer.

The protein resides in the cytoplasm. The enzyme catalyses glycyl-tRNA(Ala) + H2O = tRNA(Ala) + glycine + H(+). It carries out the reaction a D-aminoacyl-tRNA + H2O = a tRNA + a D-alpha-amino acid + H(+). An aminoacyl-tRNA editing enzyme that deacylates mischarged D-aminoacyl-tRNAs. Also deacylates mischarged glycyl-tRNA(Ala), protecting cells against glycine mischarging by AlaRS. Acts via tRNA-based rather than protein-based catalysis; rejects L-amino acids rather than detecting D-amino acids in the active site. By recycling D-aminoacyl-tRNA to D-amino acids and free tRNA molecules, this enzyme counteracts the toxicity associated with the formation of D-aminoacyl-tRNA entities in vivo and helps enforce protein L-homochirality. The chain is D-aminoacyl-tRNA deacylase from Streptomyces coelicolor (strain ATCC BAA-471 / A3(2) / M145).